Here is a 428-residue protein sequence, read N- to C-terminus: Light-independent protochlorophyllide reductase subunit N (428 aa).

[4Fe-4S] cluster is bound by residues cysteine 29, cysteine 54, and cysteine 115.

This sequence belongs to the BchN/ChlN family. As to quaternary structure, protochlorophyllide reductase is composed of three subunits; BchL, BchN and BchB. Forms a heterotetramer of two BchB and two BchN subunits. [4Fe-4S] cluster is required as a cofactor.

The catalysed reaction is chlorophyllide a + oxidized 2[4Fe-4S]-[ferredoxin] + 2 ADP + 2 phosphate = protochlorophyllide a + reduced 2[4Fe-4S]-[ferredoxin] + 2 ATP + 2 H2O. Its pathway is porphyrin-containing compound metabolism; bacteriochlorophyll biosynthesis (light-independent). In terms of biological role, component of the dark-operative protochlorophyllide reductase (DPOR) that uses Mg-ATP and reduced ferredoxin to reduce ring D of protochlorophyllide (Pchlide) to form chlorophyllide a (Chlide). This reaction is light-independent. The NB-protein (BchN-BchB) is the catalytic component of the complex. The protein is Light-independent protochlorophyllide reductase subunit N of Cereibacter sphaeroides (strain ATCC 17025 / ATH 2.4.3) (Rhodobacter sphaeroides).